A 250-amino-acid polypeptide reads, in one-letter code: Cholesterol ring-cleaving hydrolase IpdB subunit (250 aa).

Belongs to the 3-oxoacid CoA-transferase subunit B family. Heterotetramer composed of 2 IpdA subunits and 2 IpdB subunits.

The catalysed reaction is (3E)-2-(2-carboxylatoethyl)-3-methyl-6-oxocyclohex-1-ene-1-carboxyl-CoA + H2O = 6-methyl-3,7-dioxodecanedioyl-CoA. The protein operates within steroid metabolism; cholesterol degradation. In terms of biological role, involved in the final steps of cholesterol and steroid degradation. Opens the last steroid ring of cholesterol by catalyzing the hydrolysis of (3E)-2-(2-carboxylatoethyl)-3-methyl-6-oxocyclohex-1-ene-1-carboxyl-CoA (COCHEA-CoA) to 6-methyl-3,7-dioxodecanedioyl-CoA (MeDODA-CoA). This is Cholesterol ring-cleaving hydrolase IpdB subunit from Mycobacterium bovis (strain ATCC BAA-935 / AF2122/97).